A 357-amino-acid chain; its full sequence is Large ribosomal subunit protein uL10 (357 aa).

The tract at residues 311–357 (MVSRSAEAAERKEKEEEEEEEAEEEEAEEEEEEEEEEAAAGLGALFG) is disordered. Acidic residues predominate over residues 325–348 (EEEEEEEAEEEEAEEEEEEEEEEA).

It belongs to the universal ribosomal protein uL10 family. In terms of assembly, part of the 50S ribosomal subunit. Forms part of the ribosomal stalk which helps the ribosome interact with GTP-bound translation factors. Forms a heptameric L10(L12)2(L12)2(L12)2 complex, where L10 forms an elongated spine to which the L12 dimers bind in a sequential fashion.

Functionally, forms part of the ribosomal stalk, playing a central role in the interaction of the ribosome with GTP-bound translation factors. The chain is Large ribosomal subunit protein uL10 from Methanopyrus kandleri (strain AV19 / DSM 6324 / JCM 9639 / NBRC 100938).